Here is a 206-residue protein sequence, read N- to C-terminus: LysM and putative peptidoglycan-binding domain-containing protein 2 (206 aa).

The region spanning 59–103 is the LysM domain; sequence IEHCLSPSDTLQGIALKYGVTMEQIKRANKLFSTDCIFLRKSLNI. Residues 184–206 form a disordered region; sequence AQRLKEEDDLRHDGSYATCSYQH. Residues 186–197 are compositionally biased toward basic and acidic residues; the sequence is RLKEEDDLRHDG.

The protein is LysM and putative peptidoglycan-binding domain-containing protein 2 (lysmd2) of Xenopus laevis (African clawed frog).